The following is a 96-amino-acid chain: Co-chaperonin GroES (96 aa).

It belongs to the GroES chaperonin family. Heptamer of 7 subunits arranged in a ring. Interacts with the chaperonin GroEL.

The protein localises to the cytoplasm. Functionally, together with the chaperonin GroEL, plays an essential role in assisting protein folding. The GroEL-GroES system forms a nano-cage that allows encapsulation of the non-native substrate proteins and provides a physical environment optimized to promote and accelerate protein folding. GroES binds to the apical surface of the GroEL ring, thereby capping the opening of the GroEL channel. In Hydrogenovibrio crunogenus (strain DSM 25203 / XCL-2) (Thiomicrospira crunogena), this protein is Co-chaperonin GroES.